The chain runs to 326 residues: Vitamin B12 import system permease protein BtuC (326 aa).

Over 1–10 (MLTLARQQQR) the chain is Cytoplasmic. Residues 11 to 35 (QNIRWLLCLSVLMLLALLLSLCAGE) traverse the membrane as a helical segment. The Periplasmic portion of the chain corresponds to 36-56 (QWISPGDWFSPRGELFVWQIR). A helical transmembrane segment spans residues 57 to 81 (LPRTLAVLLVGAALAISGAVMQALF). At 82–92 (ENPLAEPGLLG) the chain is on the cytoplasmic side. A helical transmembrane segment spans residues 93–107 (VSNGAGVGLIAAVLL). Residues 108 to 113 (GQGQLP) are Periplasmic-facing. The helical transmembrane segment at 114 to 138 (NWALGLCAIAGALIITLILLRFARR) threads the bilayer. Residues 139–141 (HLS) are Cytoplasmic-facing. Residues 142–166 (TSRLLLAGVALGIICSALMTWAIYF) traverse the membrane as a helical segment. Residues 167–190 (STSVDLRQLMYWMMGGFGGVDWRQ) lie on the Periplasmic side of the membrane. The chain crosses the membrane as a helical span at residues 191 to 206 (SWLMLALIPMLLWICC). At 207 to 228 (QSRPMNMLALGEISARQLGLPL) the chain is on the cytoplasmic side. Residues 229 to 249 (WFWRNVLVAATGWMVGVSVAL) traverse the membrane as a helical segment. The Periplasmic portion of the chain corresponds to 250 to 257 (AGAIGFIG). A helical transmembrane segment spans residues 258–267 (LVIPHILRLC). Residues 268 to 274 (GLTDHRA) are Cytoplasmic-facing. A helical membrane pass occupies residues 275–296 (LLPGCALAGASALLLADIVARL). At 297–304 (ALAAAELP) the chain is on the periplasmic side. A helical transmembrane segment spans residues 305–324 (IGVVTATLGAPVFIWLLLKA). Over 325-326 (GR) the chain is Cytoplasmic.

It belongs to the binding-protein-dependent transport system permease family. FecCD subfamily. The complex is composed of two ATP-binding proteins (BtuD), two transmembrane proteins (BtuC) and a solute-binding protein (BtuF).

It localises to the cell inner membrane. Part of the ABC transporter complex BtuCDF involved in vitamin B12 import. Involved in the translocation of the substrate across the membrane. The chain is Vitamin B12 import system permease protein BtuC (btuC) from Escherichia coli O157:H7.